The following is an 884-amino-acid chain: Alanine--tRNA ligase (884 aa).

Zn(2+)-binding residues include histidine 568, histidine 572, cysteine 670, and histidine 674.

It belongs to the class-II aminoacyl-tRNA synthetase family. Requires Zn(2+) as cofactor.

The protein resides in the cytoplasm. It carries out the reaction tRNA(Ala) + L-alanine + ATP = L-alanyl-tRNA(Ala) + AMP + diphosphate. Catalyzes the attachment of alanine to tRNA(Ala) in a two-step reaction: alanine is first activated by ATP to form Ala-AMP and then transferred to the acceptor end of tRNA(Ala). Also edits incorrectly charged Ser-tRNA(Ala) and Gly-tRNA(Ala) via its editing domain. The chain is Alanine--tRNA ligase from Synechococcus sp. (strain JA-2-3B'a(2-13)) (Cyanobacteria bacterium Yellowstone B-Prime).